Here is a 643-residue protein sequence, read N- to C-terminus: 1-deoxy-D-xylulose-5-phosphate synthase (643 aa).

Residues histidine 72 and 113–115 contribute to the thiamine diphosphate site; that span reads GHA. Aspartate 144 is a binding site for Mg(2+). Thiamine diphosphate contacts are provided by residues 145-146, asparagine 174, tyrosine 287, and glutamate 370; that span reads GA. Mg(2+) is bound at residue asparagine 174.

This sequence belongs to the transketolase family. DXPS subfamily. As to quaternary structure, homodimer. Mg(2+) serves as cofactor. Requires thiamine diphosphate as cofactor.

It carries out the reaction D-glyceraldehyde 3-phosphate + pyruvate + H(+) = 1-deoxy-D-xylulose 5-phosphate + CO2. Its pathway is metabolic intermediate biosynthesis; 1-deoxy-D-xylulose 5-phosphate biosynthesis; 1-deoxy-D-xylulose 5-phosphate from D-glyceraldehyde 3-phosphate and pyruvate: step 1/1. In terms of biological role, catalyzes the acyloin condensation reaction between C atoms 2 and 3 of pyruvate and glyceraldehyde 3-phosphate to yield 1-deoxy-D-xylulose-5-phosphate (DXP). This Parasynechococcus marenigrum (strain WH8102) protein is 1-deoxy-D-xylulose-5-phosphate synthase.